The primary structure comprises 329 residues: Ribosomal RNA small subunit methyltransferase C (329 aa).

The protein belongs to the methyltransferase superfamily. RsmC family. As to quaternary structure, monomer.

The protein localises to the cytoplasm. The enzyme catalyses guanosine(1207) in 16S rRNA + S-adenosyl-L-methionine = N(2)-methylguanosine(1207) in 16S rRNA + S-adenosyl-L-homocysteine + H(+). In terms of biological role, specifically methylates the guanine in position 1207 of 16S rRNA in the 30S particle. The polypeptide is Ribosomal RNA small subunit methyltransferase C (Actinobacillus pleuropneumoniae serotype 5b (strain L20)).